Here is a 403-residue protein sequence, read N- to C-terminus: S-adenosylmethionine synthase (403 aa).

His15 contributes to the ATP binding site. Asp17 contributes to the Mg(2+) binding site. Residue Glu43 coordinates K(+). L-methionine is bound by residues Glu56 and Gln99. The segment at 99–109 (QSPDINQGVDR) is flexible loop. ATP-binding positions include 166-168 (DAK), 232-233 (KF), Asp241, 247-248 (RK), Ala264, and Lys268. Asp241 is a binding site for L-methionine. Lys272 serves as a coordination point for L-methionine.

The protein belongs to the AdoMet synthase family. In terms of assembly, homotetramer; dimer of dimers. Requires Mg(2+) as cofactor. The cofactor is K(+).

It localises to the cytoplasm. It carries out the reaction L-methionine + ATP + H2O = S-adenosyl-L-methionine + phosphate + diphosphate. Its pathway is amino-acid biosynthesis; S-adenosyl-L-methionine biosynthesis; S-adenosyl-L-methionine from L-methionine: step 1/1. In terms of biological role, catalyzes the formation of S-adenosylmethionine (AdoMet) from methionine and ATP. The overall synthetic reaction is composed of two sequential steps, AdoMet formation and the subsequent tripolyphosphate hydrolysis which occurs prior to release of AdoMet from the enzyme. This Xylella fastidiosa (strain M12) protein is S-adenosylmethionine synthase.